Reading from the N-terminus, the 309-residue chain is Probable inactive poly [ADP-ribose] polymerase SRO5 (309 aa).

Positions 28 to 255 (CDSSSDRSFA…AFPVLIKALS (228 aa)) constitute a PARP catalytic domain. In terms of domain architecture, RST spans 238–309 (KRLRSPWMAF…IKACGHKVQH (72 aa)).

In terms of assembly, interacts with dehydration-responsive DREB2 proteins and a number of transcription factors belonging to several protein families.

It is found in the nucleus matrix. Functionally, probable inactive ADP-ribosyltransferase that may be involved in stress and developmental responses. The sequence is that of Probable inactive poly [ADP-ribose] polymerase SRO5 (SRO5) from Arabidopsis thaliana (Mouse-ear cress).